An 892-amino-acid polypeptide reads, in one-letter code: Chromodomain-helicase-DNA-binding protein 3 (892 aa).

Basic and acidic residues predominate over residues 1-20 (MSSKRGADPDWKTPGKASKD). Positions 1–29 (MSSKRGADPDWKTPGKASKDKRPKTNAKK) are disordered. The PHD-type zinc finger occupies 35–82 (EEYCKVCSDGGDLLCCDSCPSVYHRTCLSPPLKSIPKGDWICPRCIPL). Chromo domains are found at residues 84–156 (GKAE…PSLE) and 179–240 (LLVQ…GRQR). In terms of domain architecture, Helicase ATP-binding spans 279–458 (RYSWGQGIPT…FHLLNFLSSG (180 aa)). Residue 292-299 (DEMGLGKT) coordinates ATP. A DEAH box motif is present at residues 409–412 (DEAH). One can recognise a Helicase C-terminal domain in the interval 590-739 (LLSKMLKQLK…LTHLVVRPGM (150 aa)). A disordered region spans residues 839-892 (SQPKLPKKQKKQSQQSQVDVESIMGKGKRIRKEIDYSNQYPSPNRATPSSIVLM). Positions 874-892 (YSNQYPSPNRATPSSIVLM) are enriched in polar residues.

Belongs to the SNF2/RAD54 helicase family. In terms of assembly, monomer.

Its subcellular location is the nucleus. It is found in the chromosome. It carries out the reaction ATP + H2O = ADP + phosphate + H(+). With respect to regulation, ATPase activity is stimulated by binding to DNA or nucleosomes, but is strongly activated by nucleosomes. In terms of biological role, ATP-dependent chromatin-remodeling factor which acts in nucleosome-remodeling by catalyzing ATP-dependent nucleosome mobilization. Likely to be involved in the regulation of transcription. The chain is Chromodomain-helicase-DNA-binding protein 3 from Drosophila melanogaster (Fruit fly).